Reading from the N-terminus, the 235-residue chain is Phosphoribosylaminoimidazole-succinocarboxamide synthase (235 aa).

The protein belongs to the SAICAR synthetase family.

The enzyme catalyses 5-amino-1-(5-phospho-D-ribosyl)imidazole-4-carboxylate + L-aspartate + ATP = (2S)-2-[5-amino-1-(5-phospho-beta-D-ribosyl)imidazole-4-carboxamido]succinate + ADP + phosphate + 2 H(+). It participates in purine metabolism; IMP biosynthesis via de novo pathway; 5-amino-1-(5-phospho-D-ribosyl)imidazole-4-carboxamide from 5-amino-1-(5-phospho-D-ribosyl)imidazole-4-carboxylate: step 1/2. The polypeptide is Phosphoribosylaminoimidazole-succinocarboxamide synthase (Clostridium beijerinckii (strain ATCC 51743 / NCIMB 8052) (Clostridium acetobutylicum)).